Consider the following 288-residue polypeptide: Acetyl-coenzyme A carboxylase carboxyl transferase subunit beta (288 aa).

The region spanning 33–288 (LFSQCPGCKH…LVRLHGGSPR (256 aa)) is the CoA carboxyltransferase N-terminal domain. Residues Cys37, Cys40, Cys55, and Cys58 each coordinate Zn(2+). The C4-type zinc-finger motif lies at 37–58 (CPGCKHTIYQKDLGSERICPHC).

Belongs to the AccD/PCCB family. Acetyl-CoA carboxylase is a heterohexamer composed of biotin carboxyl carrier protein (AccB), biotin carboxylase (AccC) and two subunits each of ACCase subunit alpha (AccA) and ACCase subunit beta (AccD). Requires Zn(2+) as cofactor.

It is found in the cytoplasm. The catalysed reaction is N(6)-carboxybiotinyl-L-lysyl-[protein] + acetyl-CoA = N(6)-biotinyl-L-lysyl-[protein] + malonyl-CoA. It functions in the pathway lipid metabolism; malonyl-CoA biosynthesis; malonyl-CoA from acetyl-CoA: step 1/1. Component of the acetyl coenzyme A carboxylase (ACC) complex. Biotin carboxylase (BC) catalyzes the carboxylation of biotin on its carrier protein (BCCP) and then the CO(2) group is transferred by the transcarboxylase to acetyl-CoA to form malonyl-CoA. The sequence is that of Acetyl-coenzyme A carboxylase carboxyl transferase subunit beta from Streptococcus pneumoniae serotype 4 (strain ATCC BAA-334 / TIGR4).